Consider the following 536-residue polypeptide: Glutamate--tRNA ligase, mitochondrial (536 aa).

Residue 48 to 50 participates in L-glutamate binding; it reads RFA. Positions 53–61 match the 'HIGH' region motif; sequence PTGFLHLGS. Position 58 (His58) interacts with ATP. L-glutamate contacts are provided by residues Glu84, 235–239, and Arg253; that span reads YHLAN. ATP-binding positions include Glu256 and 291–295; that span reads KLSKR. Positions 291–295 match the 'KMSKS' region motif; that stretch reads KLSKR.

It belongs to the class-I aminoacyl-tRNA synthetase family. Glutamate--tRNA ligase type 1 subfamily.

Its subcellular location is the mitochondrion matrix. It carries out the reaction tRNA(Glu) + L-glutamate + ATP = L-glutamyl-tRNA(Glu) + AMP + diphosphate. Its function is as follows. Catalyzes the attachment of glutamate to tRNA(Glu) in a two-step reaction: glutamate is first activated by ATP to form Glu-AMP and then transferred to the acceptor end of tRNA(Glu). The sequence is that of Glutamate--tRNA ligase, mitochondrial (MSE1) from Saccharomyces cerevisiae (strain ATCC 204508 / S288c) (Baker's yeast).